Consider the following 839-residue polypeptide: DNA gyrase subunit A (839 aa).

One can recognise a Topo IIA-type catalytic domain in the interval 46–510 (LPDARDGLKP…ISEDIDDEDL (465 aa)). The active-site O-(5'-phospho-DNA)-tyrosine intermediate is the Y134. Residues 537 to 543 (QHRGGVG) carry the GyrA-box motif.

It belongs to the type II topoisomerase GyrA/ParC subunit family. Heterotetramer, composed of two GyrA and two GyrB chains. In the heterotetramer, GyrA contains the active site tyrosine that forms a transient covalent intermediate with DNA, while GyrB binds cofactors and catalyzes ATP hydrolysis.

The protein resides in the cytoplasm. It carries out the reaction ATP-dependent breakage, passage and rejoining of double-stranded DNA.. Its function is as follows. A type II topoisomerase that negatively supercoils closed circular double-stranded (ds) DNA in an ATP-dependent manner to modulate DNA topology and maintain chromosomes in an underwound state. Negative supercoiling favors strand separation, and DNA replication, transcription, recombination and repair, all of which involve strand separation. Also able to catalyze the interconversion of other topological isomers of dsDNA rings, including catenanes and knotted rings. Type II topoisomerases break and join 2 DNA strands simultaneously in an ATP-dependent manner. The chain is DNA gyrase subunit A from Mycoplasma pneumoniae (strain ATCC 29342 / M129 / Subtype 1) (Mycoplasmoides pneumoniae).